The primary structure comprises 274 residues: Beta-lysine N(6)-acetyltransferase (274 aa).

The region spanning 123–274 (FHLKIANETD…DMNFWYKLSE (152 aa)) is the N-acetyltransferase domain.

It belongs to the acetyltransferase family.

It carries out the reaction (3S)-3,6-diaminohexanoate + acetyl-CoA = (3S)-6-acetamido-3-aminohexanoate + CoA + H(+). In terms of biological role, catalyzes the acetylation of beta-lysine to N6-acetyl-beta-lysine, a compatible solute produced by methanogenic archaea that helps cells to cope with salt stress. This is Beta-lysine N(6)-acetyltransferase from Methanococcus maripaludis (strain DSM 14266 / JCM 13030 / NBRC 101832 / S2 / LL).